Consider the following 529-residue polypeptide: Chaperonin GroEL, chloroplastic (529 aa).

Residues 29–32 (TLGP), 86–90 (DGTTT), Gly414, 480–482 (DAA), and Asp496 contribute to the ATP site.

The protein belongs to the chaperonin (HSP60) family. As to quaternary structure, forms a cylinder of 14 subunits composed of two heptameric rings stacked back-to-back. Interacts with the co-chaperonin GroES.

It localises to the plastid. The protein localises to the chloroplast. The catalysed reaction is ATP + H2O + a folded polypeptide = ADP + phosphate + an unfolded polypeptide.. Functionally, together with its co-chaperonin GroES, plays an essential role in assisting protein folding. The GroEL-GroES system forms a nano-cage that allows encapsulation of the non-native substrate proteins and provides a physical environment optimized to promote and accelerate protein folding. In Guillardia theta (Cryptophyte), this protein is Chaperonin GroEL, chloroplastic.